The following is a 531-amino-acid chain: Tyrosine 2,3-aminomutase (531 aa).

Tyr51 serves as the catalytic Proton donor/acceptor. His81 serves as a coordination point for substrate. The 5-imidazolinone (Ala-Gly) cross-link spans 140-142 (ASG). The residue at position 141 (Ser141) is a 2,3-didehydroalanine (Ser). Residues Asn193 and Arg298 each contribute to the substrate site.

Belongs to the TAL/TAM family. In terms of assembly, homotetramer; dimer of dimers. Post-translationally, contains an active site 4-methylidene-imidazol-5-one (MIO), which is formed autocatalytically by cyclization and dehydration of residues Ala-Ser-Gly.

The catalysed reaction is L-tyrosine = 3-amino-3-(4-hydroxyphenyl)propanoate. The enzyme catalyses L-tyrosine = (E)-4-coumarate + NH4(+). Functionally, has aminomutase and, to a lesser extent, ammonia-lyase activity. Primarily, catalyzes the rearrangement of L-tyrosine to R-beta-tyrosine, which is incorporated into secondary metabolites called chondramides. The aminomutase activity mainly produces R-beta-tyrosine but also S-beta tyrosine in smaller amounts. Does not accept D-tyrosine, L-histidine or L-phenylalanine as substrates. This chain is Tyrosine 2,3-aminomutase, found in Chondromyces crocatus.